The primary structure comprises 571 residues: Proline--tRNA ligase (571 aa).

This sequence belongs to the class-II aminoacyl-tRNA synthetase family. ProS type 1 subfamily. As to quaternary structure, homodimer.

It is found in the cytoplasm. The enzyme catalyses tRNA(Pro) + L-proline + ATP = L-prolyl-tRNA(Pro) + AMP + diphosphate. Functionally, catalyzes the attachment of proline to tRNA(Pro) in a two-step reaction: proline is first activated by ATP to form Pro-AMP and then transferred to the acceptor end of tRNA(Pro). As ProRS can inadvertently accommodate and process non-cognate amino acids such as alanine and cysteine, to avoid such errors it has two additional distinct editing activities against alanine. One activity is designated as 'pretransfer' editing and involves the tRNA(Pro)-independent hydrolysis of activated Ala-AMP. The other activity is designated 'posttransfer' editing and involves deacylation of mischarged Ala-tRNA(Pro). The misacylated Cys-tRNA(Pro) is not edited by ProRS. In Pseudoalteromonas atlantica (strain T6c / ATCC BAA-1087), this protein is Proline--tRNA ligase.